The chain runs to 669 residues: UvrABC system protein C (669 aa).

In terms of domain architecture, GIY-YIG spans 14 to 91; it reads DSPGCYLHKD…IQRYKPKYNI (78 aa). The region spanning 196–231 is the UVR domain; the sequence is KKIVKELEGKMISASDNMEFEQAAEYRDVIKAIGTL. The disordered stretch occupies residues 647–669; that stretch reads PHKSDENWESIKDNVPLLKSEKS. Residues 648–658 show a composition bias toward basic and acidic residues; the sequence is HKSDENWESIK.

This sequence belongs to the UvrC family. Interacts with UvrB in an incision complex.

It is found in the cytoplasm. The UvrABC repair system catalyzes the recognition and processing of DNA lesions. UvrC both incises the 5' and 3' sides of the lesion. The N-terminal half is responsible for the 3' incision and the C-terminal half is responsible for the 5' incision. In Lactococcus lactis subsp. cremoris (strain MG1363), this protein is UvrABC system protein C.